A 205-amino-acid chain; its full sequence is Protein GrpE (205 aa).

The segment at M1–P40 is disordered.

Belongs to the GrpE family. In terms of assembly, homodimer.

It localises to the cytoplasm. Participates actively in the response to hyperosmotic and heat shock by preventing the aggregation of stress-denatured proteins, in association with DnaK and GrpE. It is the nucleotide exchange factor for DnaK and may function as a thermosensor. Unfolded proteins bind initially to DnaJ; upon interaction with the DnaJ-bound protein, DnaK hydrolyzes its bound ATP, resulting in the formation of a stable complex. GrpE releases ADP from DnaK; ATP binding to DnaK triggers the release of the substrate protein, thus completing the reaction cycle. Several rounds of ATP-dependent interactions between DnaJ, DnaK and GrpE are required for fully efficient folding. This Acidobacterium capsulatum (strain ATCC 51196 / DSM 11244 / BCRC 80197 / JCM 7670 / NBRC 15755 / NCIMB 13165 / 161) protein is Protein GrpE.